Reading from the N-terminus, the 708-residue chain is Protein MICRORCHIDIA 5 (708 aa).

Positions 1-11 (MAESGSTNPKS) are enriched in polar residues. The disordered stretch occupies residues 1-47 (MAESGSTNPKSPSVVPDSTLGGLKRDLRNYHDGDDSNNLSIKKSKTT). Positions 23-34 (LKRDLRNYHDGD) are enriched in basic and acidic residues. A coiled-coil region spans residues 590 to 665 (SVNLEAELQK…LENRQEGVST (76 aa)). The Nuclear localization signal motif lies at 672–679 (ARRDVTED).

The protein belongs to the MORC ATPase protein family. As to quaternary structure, homodimer and heterodimer. Component of an RNA-directed DNA methylation (RdDM) complex. Mg(2+) is required as a cofactor. Mn(2+) serves as cofactor.

It is found in the nucleus. Exhibits ATPase activity. Binds DNA/RNA in a non-specific manner and exhibits endonuclease activity. Probably involved in DNA repair. Involved in RNA-directed DNA methylation (RdDM) as a component of the RdDM machinery and required for gene silencing. May also be involved in the regulation of chromatin architecture to maintain gene silencing. This Arabidopsis thaliana (Mouse-ear cress) protein is Protein MICRORCHIDIA 5.